The primary structure comprises 79 residues: UPF0154 protein SAK_1616 (79 aa).

A helical membrane pass occupies residues 5 to 25 (IWILLIIVALFGGLVGGIFIA).

It belongs to the UPF0154 family.

The protein resides in the cell membrane. The chain is UPF0154 protein SAK_1616 from Streptococcus agalactiae serotype Ia (strain ATCC 27591 / A909 / CDC SS700).